The following is a 481-amino-acid chain: UDP-N-acetylmuramoyl-L-alanyl-D-glutamate--L-lysine ligase (481 aa).

Ser-42 lines the UDP-N-acetyl-alpha-D-muramoyl-L-alanyl-D-glutamate pocket. 118-124 provides a ligand contact to ATP; sequence GTKGKTT. UDP-N-acetyl-alpha-D-muramoyl-L-alanyl-D-glutamate-binding positions include Gln-158, 160-161, Ser-187, and Arg-195; that span reads TT. Lys-229 carries the N6-carboxylysine modification. The short motif at 404 to 407 is the L-lysine recognition motif element; the sequence is DDPN.

Belongs to the MurCDEF family. MurE subfamily. Carboxylation is probably crucial for Mg(2+) binding and, consequently, for the gamma-phosphate positioning of ATP.

It localises to the cytoplasm. It carries out the reaction UDP-N-acetyl-alpha-D-muramoyl-L-alanyl-D-glutamate + L-lysine + ATP = UDP-N-acetyl-alpha-D-muramoyl-L-alanyl-gamma-D-glutamyl-L-lysine + ADP + phosphate + H(+). It functions in the pathway cell wall biogenesis; peptidoglycan biosynthesis. Its function is as follows. Catalyzes the addition of L-lysine to the nucleotide precursor UDP-N-acetylmuramoyl-L-alanyl-D-glutamate (UMAG) in the biosynthesis of bacterial cell-wall peptidoglycan. This Streptococcus pyogenes serotype M6 (strain ATCC BAA-946 / MGAS10394) protein is UDP-N-acetylmuramoyl-L-alanyl-D-glutamate--L-lysine ligase.